A 141-amino-acid polypeptide reads, in one-letter code: Translation initiation factor 2 subunit beta (141 aa).

Belongs to the eIF-2-beta/eIF-5 family. As to quaternary structure, heterotrimer composed of an alpha, a beta and a gamma chain.

In terms of biological role, eIF-2 functions in the early steps of protein synthesis by forming a ternary complex with GTP and initiator tRNA. This Sulfolobus acidocaldarius (strain ATCC 33909 / DSM 639 / JCM 8929 / NBRC 15157 / NCIMB 11770) protein is Translation initiation factor 2 subunit beta.